Here is a 110-residue protein sequence, read N- to C-terminus: Cysteine-rich and transmembrane domain-containing protein 1 (110 aa).

Residues 1–18 show a composition bias toward pro residues; it reads MNYENPPPYASPPAPYPP. The tract at residues 1-45 is disordered; the sequence is MNYENPPPYASPPAPYPPYGQQQPSYPVPNQYPGNPPGPVGYQPA. Residues 19–29 show a composition bias toward low complexity; sequence YGQQQPSYPVP. Residues 87–104 form a helical membrane-spanning segment; it reads SGESACLTACWTALCCCC.

Belongs to the CYSTM1 family.

It localises to the membrane. In Xenopus tropicalis (Western clawed frog), this protein is Cysteine-rich and transmembrane domain-containing protein 1 (cystm1).